We begin with the raw amino-acid sequence, 223 residues long: Ribose-5-phosphate isomerase A (223 aa).

Substrate is bound by residues 32 to 35 (TGST), 85 to 88 (DGAD), and 98 to 101 (KGGG). E107 acts as the Proton acceptor in catalysis. Residue K125 participates in substrate binding.

The protein belongs to the ribose 5-phosphate isomerase family. Homodimer.

The catalysed reaction is aldehydo-D-ribose 5-phosphate = D-ribulose 5-phosphate. The protein operates within carbohydrate degradation; pentose phosphate pathway; D-ribose 5-phosphate from D-ribulose 5-phosphate (non-oxidative stage): step 1/1. Catalyzes the reversible conversion of ribose-5-phosphate to ribulose 5-phosphate. The polypeptide is Ribose-5-phosphate isomerase A (Pseudomonas fluorescens (strain ATCC BAA-477 / NRRL B-23932 / Pf-5)).